The following is an 810-amino-acid chain: Oligoxyloglucan-reducing end-specific xyloglucanase (810 aa).

The N-terminal stretch at 1–28 is a signal peptide; sequence MRAKNGPGSWLALTAIATSLNTLALAAA. The N-linked (GlcNAc...) asparagine glycan is linked to asparagine 32. Residue aspartate 66 is the Nucleophile of the active site. The stretch at 126 to 135 is one BNR 1 repeat; the sequence is FVSQDRGATF. Asparagine 188 carries an N-linked (GlcNAc...) asparagine glycan. The BNR 2 repeat unit spans residues 226–236; the sequence is YVTRDSGESWE. 3 N-linked (GlcNAc...) asparagine glycosylation sites follow: asparagine 298, asparagine 312, and asparagine 321. The stretch at 359–369 is one BNR 3 repeat; the sequence is YLSHDGGKSWK. Residue asparagine 455 is glycosylated (N-linked (GlcNAc...) asparagine). Catalysis depends on aspartate 498, which acts as the Proton donor. An N-linked (GlcNAc...) asparagine glycan is attached at asparagine 544. A BNR 4 repeat occupies 554–564; sequence YSADGGSSWTK. Asparagine 573 and asparagine 612 each carry an N-linked (GlcNAc...) asparagine glycan. The stretch at 617-626 is one BNR 5 repeat; sequence YVTTDLGQTW. Asparagine 638 is a glycosylation site (N-linked (GlcNAc...) asparagine). 3 BNR repeats span residues 658-667, 705-716, and 759-769; these read YLSRDGGLSY, YHTRNFGKKWTK, and YRSDDNGKTWV.

The protein belongs to the glycosyl hydrolase 74 family.

It localises to the secreted. It carries out the reaction Hydrolysis of cellobiose from the reducing end of xyloglucans consisting of a beta-(1-&gt;4)-linked glucan carrying alpha-D-xylosyl groups on O-6 of the glucose residues. To be a substrate, the first residue must be unsubstituted, the second residue may bear a xylosyl group, whether further glycosylated or not, and the third residue, which becomes the new terminus by the action of the enzyme, is preferably xylosylated, but this xylose residue must not be further substituted.. Its function is as follows. Oligoxyloglucan-reducing end-specific xyloglucanase involved in degradation of xyloglucans. Releases the first two glycosyl segments from oligoxyloglucans. Active against cotton xyloglucan, tamarind xyloglucan and tamarind xyloglucan oligomers. This is Oligoxyloglucan-reducing end-specific xyloglucanase (xgcA) from Emericella nidulans (strain FGSC A4 / ATCC 38163 / CBS 112.46 / NRRL 194 / M139) (Aspergillus nidulans).